The sequence spans 273 residues: Ciliary microtubule inner protein 2B (273 aa).

Disordered stretches follow at residues 59-85 (TLLPPIQSPRSPVISKGRLPPRRGHER) and 123-164 (RHGE…HASP). Positions 123–159 (RHGEQESHQLPDGAKGEREVEEDQLREAEEPPLKQEL) are enriched in basic and acidic residues.

The protein belongs to the CIMIP2 family. In terms of assembly, microtubule inner protein component of sperm flagellar doublet microtubules. In terms of tissue distribution, expressed in airway epithelial cells.

The protein localises to the cytoplasm. It localises to the cytoskeleton. It is found in the cilium axoneme. Its subcellular location is the flagellum axoneme. Microtubule inner protein (MIP) part of the dynein-decorated doublet microtubules (DMTs) in cilia axoneme, which is required for motile cilia beating. This chain is Ciliary microtubule inner protein 2B (Cimip2b), found in Mus musculus (Mouse).